We begin with the raw amino-acid sequence, 378 residues long: Succinyl-diaminopimelate desuccinylase (378 aa).

Histidine 67 lines the Zn(2+) pocket. The active site involves aspartate 69. Aspartate 100 is a binding site for Zn(2+). Glutamate 134 functions as the Proton acceptor in the catalytic mechanism. Positions 135, 163, and 349 each coordinate Zn(2+).

It belongs to the peptidase M20A family. DapE subfamily. Homodimer. The cofactor is Zn(2+). Co(2+) serves as cofactor.

The catalysed reaction is N-succinyl-(2S,6S)-2,6-diaminopimelate + H2O = (2S,6S)-2,6-diaminopimelate + succinate. It functions in the pathway amino-acid biosynthesis; L-lysine biosynthesis via DAP pathway; LL-2,6-diaminopimelate from (S)-tetrahydrodipicolinate (succinylase route): step 3/3. Catalyzes the hydrolysis of N-succinyl-L,L-diaminopimelic acid (SDAP), forming succinate and LL-2,6-diaminopimelate (DAP), an intermediate involved in the bacterial biosynthesis of lysine and meso-diaminopimelic acid, an essential component of bacterial cell walls. The sequence is that of Succinyl-diaminopimelate desuccinylase from Pasteurella multocida (strain Pm70).